A 436-amino-acid polypeptide reads, in one-letter code: GTPase Der (436 aa).

2 EngA-type G domains span residues 4–167 (PTVA…PTEV) and 175–351 (IRFS…ESQN). Residues 10 to 17 (GRPNVGKS), 57 to 61 (DTGGI), 119 to 122 (NKVD), 181 to 188 (GRPNVGKS), 229 to 233 (DTAGM), and 294 to 297 (NKWD) each bind GTP. The KH-like domain maps to 352-436 (RRISSAVLND…PIHLIARKRK (85 aa)).

This sequence belongs to the TRAFAC class TrmE-Era-EngA-EngB-Septin-like GTPase superfamily. EngA (Der) GTPase family. In terms of assembly, associates with the 50S ribosomal subunit.

Functionally, GTPase that plays an essential role in the late steps of ribosome biogenesis. The chain is GTPase Der from Streptococcus thermophilus (strain CNRZ 1066).